We begin with the raw amino-acid sequence, 540 residues long: Cytochrome P450 monooxygenase ptmG (540 aa).

N-linked (GlcNAc...) asparagine glycosylation is present at Asn17. 2 helical membrane passes run Val20 to Ile40 and Ala325 to Leu345. Cys474 is a heme binding site.

It belongs to the cytochrome P450 family. Requires heme as cofactor.

The protein resides in the membrane. It functions in the pathway secondary metabolite biosynthesis. Functionally, cytochrome P450 monooxygenase; part of the gene cluster that mediates the biosynthesis of the indole diterpenes penitrems. The geranylgeranyl diphosphate (GGPP) synthase ptmG catalyzes the first step in penitrem biosynthesis via conversion of farnesyl pyrophosphate and isopentyl pyrophosphate into geranylgeranyl pyrophosphate (GGPP). Condensation of indole-3-glycerol phosphate with GGPP by the prenyl transferase ptmC then forms 3-geranylgeranylindole (3-GGI). Epoxidation by the FAD-dependent monooxygenase ptmM leads to a epoxidized-GGI that is substrate of the terpene cyclase ptmB for cyclization to yield paspaline. Paspaline is subsequently converted to 13-desoxypaxilline by the cytochrome P450 monooxygenase ptmP, the latter being then converted to paxilline by the cytochrome P450 monooxygenase ptmQ. Paxilline is converted to beta-paxitriol via C-10 ketoreduction by the short-chain dehydrogenase ptmH which can be monoprenylated at the C-20 by the indole diterpene prenyltransferase ptmD. A two-step elimination (acetylation and elimination) process performed by the O-acetyltransferase ptmV and ptmI leads to the production of the prenylated form of penijanthine. The FAD-linked oxidoreductase ptmO then converts the prenylated form of penijanthine into PC-M5 which is in turn transformed into PC-M4 by the aromatic dimethylallyltransferase ptmE. Five sequential oxidative transformations performed by the cytochrome P450 monooxygenases ptmK, ptmU, ptmL, ptmN and ptmJ yield the various penitrem compounds. PtmK, ptmU and ptmM are involved in the formation of the key bicyclic ring of penitrem C via the formation of the intermediates secopenitrem D and penitrem D. PtmL catalyzes the epoxidation of penitrem D and C to yield penitrem B and F, respectively. PtmJ catalyzes the last benzylic hydroxylation to convert penitrem B to prenitrem E and penitrem F to penitrem A. The protein is Cytochrome P450 monooxygenase ptmG of Penicillium ochrochloron.